The following is a 498-amino-acid chain: Fascin-3 (498 aa).

This sequence belongs to the fascin family. Expressed in testis.

The protein localises to the cytoplasm. It is found in the cytoskeleton. Its function is as follows. Acts as an actin bundling protein. The chain is Fascin-3 (FSCN3) from Homo sapiens (Human).